The sequence spans 419 residues: uncharacterized protein (419 aa).

Helical transmembrane passes span 5–25, 26–46, 53–73, 102–122, 144–164, 170–190, 210–230, 234–254, 274–294, 309–329, 332–352, 360–380, and 396–416; these read MIIVFCALMMLAVPVGYALII, AAGVAVLFNGYLPLSIVAQQI, FPMLALPFFMLAGTLMLGGEL, VFGGVSGSAVANASALGSVLI, VIDVLIPPSIPMILFSLVSGV, FVAGILPGILMAASFVFVCWF, ATLALKSLPAVLLPVLIILFL, LATPTEVAVLSVVYSLALSLL, ATGVVMLVIMGSAAVGWVLTF, ISSPIVIILMMNILMLIVGMP, MPPAILLLGPIFVPLADTIGL, MMVINLGIGLYTPPIGTTLFI, and LWPFFAMAMTLLLAVSFIPAL.

The protein belongs to the YiaN/YgiK family.

The protein localises to the cell inner membrane. This is an uncharacterized protein from Sinorhizobium fredii (strain NBRC 101917 / NGR234).